Reading from the N-terminus, the 889-residue chain is DNA mismatch repair protein MutS (889 aa).

An ATP-binding site is contributed by 641-648; it reads GPNMAGKS.

It belongs to the DNA mismatch repair MutS family.

In terms of biological role, this protein is involved in the repair of mismatches in DNA. It is possible that it carries out the mismatch recognition step. This protein has a weak ATPase activity. The chain is DNA mismatch repair protein MutS from Orientia tsutsugamushi (strain Boryong) (Rickettsia tsutsugamushi).